We begin with the raw amino-acid sequence, 570 residues long: Mitogen-activated protein kinase 11 (570 aa).

One can recognise a Protein kinase domain in the interval 26–317 (YEVLEVIGKG…AQEALADPYF (292 aa)). Residues 32 to 40 (IGKGSYGLV) and Lys-55 each bind ATP. Asp-152 serves as the catalytic Proton acceptor. Thr-188 carries the phosphothreonine modification. Positions 188 to 190 (TDY) match the TXY motif. Tyr-190 carries the post-translational modification Phosphotyrosine.

Belongs to the protein kinase superfamily. CMGC Ser/Thr protein kinase family. MAP kinase subfamily. Dually phosphorylated on Thr-188 and Tyr-190, which activates the enzyme.

It catalyses the reaction L-seryl-[protein] + ATP = O-phospho-L-seryl-[protein] + ADP + H(+). The catalysed reaction is L-threonyl-[protein] + ATP = O-phospho-L-threonyl-[protein] + ADP + H(+). Its activity is regulated as follows. Activated by threonine and tyrosine phosphorylation. This is Mitogen-activated protein kinase 11 (MPK11) from Oryza sativa subsp. japonica (Rice).